A 1244-amino-acid chain; its full sequence is Mitotic chromosome and X-chromosome-associated protein mix-1 (1244 aa).

G32–S39 lines the ATP pocket. Residues V247–K355 adopt a coiled-coil conformation. Residues L337–K355 are compositionally biased toward basic and acidic residues. Residues L337–E369 are disordered. A compositionally biased stretch (polar residues) spans A356–Q365. Residues I415–D472 adopt a coiled-coil conformation. One can recognise an SMC hinge domain in the interval D526 to A654. Coiled-coil stretches lie at residues P701–A946 and Y975–L1037. Residues A919–L932 show a composition bias toward basic and acidic residues. The disordered stretch occupies residues A919 to R943. Over residues D1216 to K1232 the composition is skewed to basic and acidic residues. The interval D1216–E1244 is disordered.

Belongs to the SMC family. SMC2 subfamily. As to quaternary structure, component of the condensin I complex, which contains the mix-1/SMC2 and smc-4/SMC4 heterodimer, and three non SMC subunits that probably regulate the complex: dpy-26, capg-1 and dpy-28. Within the complex, interacts with smc-4, dpy-26, dpy-28 and capg-1. Interaction with smc-4 is required for mitotic chromosome localization. Component of the condensin II complex, which contains the mix-1/SMC2 and smc-4/SMC4 heterodimer, and three non SMC subunits, capg-2, kle-2 and hcp-6 that probably regulate the complex. Within the complex, interacts with smc-4, capg-2, kle-2 and hcp-6. Also a component of the condensin-like dosage compensation complex, which contains the mix-1/SMC2 and dpy-27/SMC4 heterodimer, and three non SMC subunits that probably regulate the complex: dpy-26, capg-1 and dpy-28. Within the complex, interacts with dpy-27, dpy-26, capg-1 and dpy-28. Requires capg-1 for hermaphrodite X chromosome localization. Interacts with smcl-1. In terms of tissue distribution, expressed in embryos and in adult somatic and germline tissues (at protein level).

It localises to the nucleus. It is found in the chromosome. Essential protein required for both chromosome condensation and segregation and X-chromosome dosage compensation depending on its binding partners. Central component of the condensin I complex, a complex required for conversion of interphase chromatin into mitotic-like condense chromosomes. The condensin complex introduces positive supercoils into relaxed DNA in the presence of type I topoisomerases. Converts nicked DNA into positive knotted forms in the presence of type II topoisomerases. Central component of the condensin II complex, a complex that seems to play a role in prophase chromosome condensation and organization. Both the condensin complex I and II play a role in meiotic and mitotic chromosome segregation. Plays a role in robust cytokinesis upon the presence of chromatin obstructions. Also a member of the condensin I-like dosage compensation complex that associates specifically with hermaphrodite X chromosomes to reduce their gene transcription during interphase. This chain is Mitotic chromosome and X-chromosome-associated protein mix-1 (mix-1), found in Caenorhabditis elegans.